An 88-amino-acid polypeptide reads, in one-letter code: Small ribosomal subunit protein uS15c (88 aa).

The protein belongs to the universal ribosomal protein uS15 family. In terms of assembly, part of the 30S ribosomal subunit.

The protein localises to the plastid. It localises to the chloroplast. The protein is Small ribosomal subunit protein uS15c (rps15) of Pinus koraiensis (Korean pine).